The primary structure comprises 196 residues: ATP-dependent Clp protease proteolytic subunit (196 aa).

Serine 96 serves as the catalytic Nucleophile. The active site involves histidine 121.

This sequence belongs to the peptidase S14 family. Fourteen ClpP subunits assemble into 2 heptameric rings which stack back to back to give a disk-like structure with a central cavity, resembling the structure of eukaryotic proteasomes.

The protein resides in the cytoplasm. The enzyme catalyses Hydrolysis of proteins to small peptides in the presence of ATP and magnesium. alpha-casein is the usual test substrate. In the absence of ATP, only oligopeptides shorter than five residues are hydrolyzed (such as succinyl-Leu-Tyr-|-NHMec, and Leu-Tyr-Leu-|-Tyr-Trp, in which cleavage of the -Tyr-|-Leu- and -Tyr-|-Trp bonds also occurs).. Cleaves peptides in various proteins in a process that requires ATP hydrolysis. Has a chymotrypsin-like activity. Plays a major role in the degradation of misfolded proteins. The chain is ATP-dependent Clp protease proteolytic subunit from Streptococcus pneumoniae (strain ATCC 700669 / Spain 23F-1).